The chain runs to 354 residues: Homer protein homolog 2 (354 aa).

In terms of domain architecture, WH1 spans 1–110 (MGEQPIFTTR…EKFQEVKEAA (110 aa)). The stretch at 92-122 (SEQQLTKFAEKFQEVKEAAKIAKDKTQEKIE) forms a coiled coil. Residues 112–122 (IAKDKTQEKIE) show a composition bias toward basic and acidic residues. A disordered region spans residues 112 to 166 (IAKDKTQEKIETSSNHSQESGRETPSSTQASSVNGTDDEKASHAGPANTHLKSEN). Positions 123-146 (TSSNHSQESGRETPSSTQASSVNG) are enriched in polar residues. A coiled-coil region spans residues 160–329 (THLKSENDKL…RHLKVELKSF (170 aa)).

Belongs to the Homer family. As to quaternary structure, forms coiled-coil structures that mediate homo- and heteromultimerization. Interacts with NFATC2; interaction is reduced by AKT activation. Interacts with NFATC1 and NFATC4. Interacts with DAGLA (via PPXXF motif); this interaction is required for the cell membrane localization of DAGLA.

It localises to the cytoplasm. The protein localises to the cell membrane. It is found in the postsynaptic density. Its subcellular location is the synapse. The protein resides in the cell projection. It localises to the stereocilium. In terms of biological role, postsynaptic density scaffolding protein. Binds and cross-links cytoplasmic regions of GRM1, GRM5, ITPR1, DNM3, RYR1, RYR2, SHANK1 and SHANK3. By physically linking GRM1 and GRM5 with ER-associated ITPR1 receptors, it aids the coupling of surface receptors to intracellular calcium release. May also couple GRM1 to PI3 kinase through its interaction with AGAP2. Isoforms can be differently regulated and may play an important role in maintaining the plasticity at glutamatergic synapses. Required for normal hearing. Negatively regulates T cell activation by inhibiting the calcineurin-NFAT pathway. Acts by competing with calcineurin/PPP3CA for NFAT protein binding, hence preventing NFAT activation by PPP3CA. This is Homer protein homolog 2 from Homo sapiens (Human).